The primary structure comprises 310 residues: Zinc-finger homeodomain protein 3 (310 aa).

Residues 1–64 form a disordered region; the sequence is MEIASQEDPI…GLGKNHDHSH (64 aa). Polar residues predominate over residues 39–56; that stretch reads LNITTSNPLLVSSNSNGL. The segment at 87–136 adopts a ZF-HD dimerization-type; degenerate zinc-finger fold; it reads YKECLKNHAATMGGNAIDGCGEFMPSGEEGSIEALTCSVCNCHRNFHRRE. Disordered regions lie at residues 184–220 and 281–310; these read TAGS…YGHN and LSKK…STNP. Residues 190–199 show a composition bias toward acidic residues; it reads ESEDLMEEEG. Residues 222 to 285 constitute a DNA-binding region (homeobox); that stretch reads KKRFRTKFTQ…NNKQNLSKKS (64 aa). The span at 281-291 shows a compositional bias: low complexity; it reads LSKKSNNVSNN. Over residues 292-310 the composition is skewed to polar residues; the sequence is VDLSAGNNDITENLASTNP.

In terms of assembly, homo- and heterodimer with other ZFHD proteins. Interacts with MIF2 and MIF3; these interactions prevent nuclear localization and DNA-binding to inhibit transcription regulation activity. Binds to ZHD1, ZHD2 and ZHD11. Interacts with HIPP30. Interacts with KIN10, KIN11 and FLZ8. Mostly expressed in flowers and inflorescence.

It is found in the nucleus. Its function is as follows. Putative transcription factor. This chain is Zinc-finger homeodomain protein 3 (ZHD3), found in Arabidopsis thaliana (Mouse-ear cress).